A 273-amino-acid polypeptide reads, in one-letter code: Putative pyruvate, phosphate dikinase regulatory protein (273 aa).

149 to 156 (GPSRTSKT) contributes to the ADP binding site.

The protein belongs to the pyruvate, phosphate/water dikinase regulatory protein family. PDRP subfamily.

The enzyme catalyses N(tele)-phospho-L-histidyl/L-threonyl-[pyruvate, phosphate dikinase] + ADP = N(tele)-phospho-L-histidyl/O-phospho-L-threonyl-[pyruvate, phosphate dikinase] + AMP + H(+). It carries out the reaction N(tele)-phospho-L-histidyl/O-phospho-L-threonyl-[pyruvate, phosphate dikinase] + phosphate + H(+) = N(tele)-phospho-L-histidyl/L-threonyl-[pyruvate, phosphate dikinase] + diphosphate. In terms of biological role, bifunctional serine/threonine kinase and phosphorylase involved in the regulation of the pyruvate, phosphate dikinase (PPDK) by catalyzing its phosphorylation/dephosphorylation. In Rickettsia canadensis (strain McKiel), this protein is Putative pyruvate, phosphate dikinase regulatory protein.